A 342-amino-acid polypeptide reads, in one-letter code: Holliday junction branch migration complex subunit RuvB (342 aa).

The large ATPase domain (RuvB-L) stretch occupies residues M1–Y179. ATP-binding positions include I18, R19, G60, K63, T64, T65, E126–F128, R169, Y179, and R216. Position 64 (T64) interacts with Mg(2+). The tract at residues N180 to E250 is small ATPAse domain (RuvB-S). The head domain (RuvB-H) stretch occupies residues R253 to E342. 3 residues coordinate DNA: R289, R308, and R313.

It belongs to the RuvB family. As to quaternary structure, homohexamer. Forms an RuvA(8)-RuvB(12)-Holliday junction (HJ) complex. HJ DNA is sandwiched between 2 RuvA tetramers; dsDNA enters through RuvA and exits via RuvB. An RuvB hexamer assembles on each DNA strand where it exits the tetramer. Each RuvB hexamer is contacted by two RuvA subunits (via domain III) on 2 adjacent RuvB subunits; this complex drives branch migration. In the full resolvosome a probable DNA-RuvA(4)-RuvB(12)-RuvC(2) complex forms which resolves the HJ.

Its subcellular location is the cytoplasm. It carries out the reaction ATP + H2O = ADP + phosphate + H(+). Its function is as follows. The RuvA-RuvB-RuvC complex processes Holliday junction (HJ) DNA during genetic recombination and DNA repair, while the RuvA-RuvB complex plays an important role in the rescue of blocked DNA replication forks via replication fork reversal (RFR). RuvA specifically binds to HJ cruciform DNA, conferring on it an open structure. The RuvB hexamer acts as an ATP-dependent pump, pulling dsDNA into and through the RuvAB complex. RuvB forms 2 homohexamers on either side of HJ DNA bound by 1 or 2 RuvA tetramers; 4 subunits per hexamer contact DNA at a time. Coordinated motions by a converter formed by DNA-disengaged RuvB subunits stimulates ATP hydrolysis and nucleotide exchange. Immobilization of the converter enables RuvB to convert the ATP-contained energy into a lever motion, pulling 2 nucleotides of DNA out of the RuvA tetramer per ATP hydrolyzed, thus driving DNA branch migration. The RuvB motors rotate together with the DNA substrate, which together with the progressing nucleotide cycle form the mechanistic basis for DNA recombination by continuous HJ branch migration. Branch migration allows RuvC to scan DNA until it finds its consensus sequence, where it cleaves and resolves cruciform DNA. The polypeptide is Holliday junction branch migration complex subunit RuvB (Rickettsia peacockii (strain Rustic)).